A 377-amino-acid polypeptide reads, in one-letter code: Actin depolymerising venom protein gelsolin 1 (377 aa).

Positions 1 to 26 (MFRQMKLGSLATKLLLACFLVTCTSG) are cleaved as a signal peptide. Gelsolin-like repeat units follow at residues 50 to 133 (FVPV…SEQF), 174 to 243 (IRVR…SSTS), and 298 to 368 (EKPL…PTAF).

Expressed by the venom gland (posterior main gland) (at protein level).

It localises to the secreted. The sequence is that of Actin depolymerising venom protein gelsolin 1 from Platymeris rhadamanthus (Red spot assassin bug).